Here is a 428-residue protein sequence, read N- to C-terminus: Enolase (428 aa).

Q163 provides a ligand contact to (2R)-2-phosphoglycerate. Catalysis depends on E205, which acts as the Proton donor. Mg(2+) is bound by residues D242, E286, and D313. (2R)-2-phosphoglycerate-binding residues include K338, R367, S368, and K389. K338 (proton acceptor) is an active-site residue.

It belongs to the enolase family. Requires Mg(2+) as cofactor.

The protein resides in the cytoplasm. The protein localises to the secreted. Its subcellular location is the cell surface. The catalysed reaction is (2R)-2-phosphoglycerate = phosphoenolpyruvate + H2O. The protein operates within carbohydrate degradation; glycolysis; pyruvate from D-glyceraldehyde 3-phosphate: step 4/5. In terms of biological role, catalyzes the reversible conversion of 2-phosphoglycerate (2-PG) into phosphoenolpyruvate (PEP). It is essential for the degradation of carbohydrates via glycolysis. This is Enolase from Geobacter sulfurreducens (strain ATCC 51573 / DSM 12127 / PCA).